The sequence spans 306 residues: D-alanine--D-alanine ligase (306 aa).

The 200-residue stretch at 101-300 folds into the ATP-grasp domain; it reads RIMLAAAGVP…FGELVTWMVE (200 aa). ATP is bound at residue 128 to 182; sequence MPTPYVLKPNAGGSSVGVFIVREDQAHPPQELTREDWPHGENLLAEEFIPGLELT. Mg(2+)-binding residues include Asp250, Glu267, and Asn269.

This sequence belongs to the D-alanine--D-alanine ligase family. Requires Mg(2+) as cofactor. Mn(2+) serves as cofactor.

Its subcellular location is the cytoplasm. The enzyme catalyses 2 D-alanine + ATP = D-alanyl-D-alanine + ADP + phosphate + H(+). The protein operates within cell wall biogenesis; peptidoglycan biosynthesis. Cell wall formation. In Xanthobacter autotrophicus (strain ATCC BAA-1158 / Py2), this protein is D-alanine--D-alanine ligase.